Here is a 656-residue protein sequence, read N- to C-terminus: Kinesin-related protein SMY1 (656 aa).

A Kinesin motor domain is found at histidine 27–isoleucine 364. Residue glycine 114–serine 121 participates in ATP binding. At threonine 583 the chain carries Phosphothreonine.

The protein belongs to the TRAFAC class myosin-kinesin ATPase superfamily. Kinesin family.

The protein resides in the cytoplasm. It localises to the cytoskeleton. Functionally, possible microtubule-based motor that can interact or substitute with myosin 2 (MYO2). This Saccharomyces cerevisiae (strain ATCC 204508 / S288c) (Baker's yeast) protein is Kinesin-related protein SMY1 (SMY1).